The sequence spans 334 residues: PDZ domain-containing protein MAGIX (334 aa).

2 stretches are compositionally biased toward basic and acidic residues: residues 1–13 (MEPR…DPRG) and 209–224 (LETH…EPRK). Disordered stretches follow at residues 1–26 (MEPR…LAGP) and 209–306 (LETH…WLVP). The PDZ domain maps to 125–209 (SVELVRGYAG…QLHLVIRRPL (85 aa)). Positions 244–260 (GSRSSSTSLVQHPPSRT) are enriched in polar residues. At Ser272 the chain carries Phosphoserine.

This is PDZ domain-containing protein MAGIX (MAGIX) from Homo sapiens (Human).